The sequence spans 345 residues: Methionine import ATP-binding protein MetN 2 (345 aa).

The 240-residue stretch at 4–243 (IELRHVKKEF…PQTEIAKRFI (240 aa)) folds into the ABC transporter domain. ATP is bound at residue 40-47 (GYSGAGKS).

This sequence belongs to the ABC transporter superfamily. Methionine importer (TC 3.A.1.24) family. The complex is composed of two ATP-binding proteins (MetN), two transmembrane proteins (MetI) and a solute-binding protein (MetQ).

It localises to the cell membrane. The catalysed reaction is L-methionine(out) + ATP + H2O = L-methionine(in) + ADP + phosphate + H(+). The enzyme catalyses D-methionine(out) + ATP + H2O = D-methionine(in) + ADP + phosphate + H(+). In terms of biological role, part of the ABC transporter complex MetNIQ involved in methionine import. Responsible for energy coupling to the transport system. The polypeptide is Methionine import ATP-binding protein MetN 2 (Enterococcus faecalis (strain ATCC 700802 / V583)).